Reading from the N-terminus, the 551-residue chain is Glucose-6-phosphate isomerase (551 aa).

The active-site Proton donor is the Glu349. Catalysis depends on residues His378 and Lys480.

It belongs to the GPI family.

Its subcellular location is the cytoplasm. The enzyme catalyses alpha-D-glucose 6-phosphate = beta-D-fructose 6-phosphate. It functions in the pathway carbohydrate biosynthesis; gluconeogenesis. Its pathway is carbohydrate degradation; glycolysis; D-glyceraldehyde 3-phosphate and glycerone phosphate from D-glucose: step 2/4. Catalyzes the reversible isomerization of glucose-6-phosphate to fructose-6-phosphate. This Prochlorococcus marinus (strain MIT 9313) protein is Glucose-6-phosphate isomerase.